A 131-amino-acid polypeptide reads, in one-letter code: Phosphoribosyl-AMP cyclohydrolase (131 aa).

Asp78 contacts Mg(2+). A Zn(2+)-binding site is contributed by Cys79. Mg(2+) contacts are provided by Asp80 and Asp82. Zn(2+) is bound by residues Cys96 and Cys103.

Belongs to the PRA-CH family. In terms of assembly, homodimer. Mg(2+) serves as cofactor. Zn(2+) is required as a cofactor.

It is found in the cytoplasm. It carries out the reaction 1-(5-phospho-beta-D-ribosyl)-5'-AMP + H2O = 1-(5-phospho-beta-D-ribosyl)-5-[(5-phospho-beta-D-ribosylamino)methylideneamino]imidazole-4-carboxamide. The protein operates within amino-acid biosynthesis; L-histidine biosynthesis; L-histidine from 5-phospho-alpha-D-ribose 1-diphosphate: step 3/9. Catalyzes the hydrolysis of the adenine ring of phosphoribosyl-AMP. This chain is Phosphoribosyl-AMP cyclohydrolase, found in Neisseria meningitidis serogroup A / serotype 4A (strain DSM 15465 / Z2491).